We begin with the raw amino-acid sequence, 282 residues long: tRNA (guanine-N(1)-)-methyltransferase (282 aa).

S-adenosyl-L-methionine contacts are provided by residues glycine 157 and 177–182 (VGDYIL).

This sequence belongs to the RNA methyltransferase TrmD family. Homodimer.

It localises to the cytoplasm. The catalysed reaction is guanosine(37) in tRNA + S-adenosyl-L-methionine = N(1)-methylguanosine(37) in tRNA + S-adenosyl-L-homocysteine + H(+). In terms of biological role, specifically methylates guanosine-37 in various tRNAs. This Rickettsia bellii (strain RML369-C) protein is tRNA (guanine-N(1)-)-methyltransferase.